The following is a 699-amino-acid chain: Long-chain-fatty-acid--CoA ligase 1 (699 aa).

Residue Met1 is modified to N-acetylmethionine. At Tyr9 the chain carries 3'-nitrotyrosine. The helical; Signal-anchor for type III membrane protein transmembrane segment at 25-45 (LPTNTLMGFGAFAALTTFWYA) threads the bilayer. Residues 46-699 (TRPKALKPPC…IDELYSTIKI (654 aa)) are Cytoplasmic-facing. A Phosphotyrosine modification is found at Tyr85. Tyr86 is subject to 3'-nitrotyrosine. Ser136 carries an O-linked (GlcNAc) serine glycan. An N6-acetyllysine mark is found at Lys208, Lys357, and Lys387. Residue Ser621 is modified to Phosphoserine. Residue Lys633 is modified to N6-acetyllysine.

Belongs to the ATP-dependent AMP-binding enzyme family. Requires Mg(2+) as cofactor. Liver, heart, epididymal adipose and to a lesser extent brain, small intestine and lung.

The protein resides in the mitochondrion outer membrane. The protein localises to the peroxisome membrane. Its subcellular location is the microsome membrane. It localises to the endoplasmic reticulum membrane. The catalysed reaction is a long-chain fatty acid + ATP + CoA = a long-chain fatty acyl-CoA + AMP + diphosphate. The enzyme catalyses (5Z,8Z,11Z,14Z)-eicosatetraenoate + ATP + CoA = (5Z,8Z,11Z,14Z)-eicosatetraenoyl-CoA + AMP + diphosphate. It carries out the reaction 3,7,11,15-tetramethylhexadecanoate + ATP + CoA = phytanoyl-CoA + AMP + diphosphate. It catalyses the reaction hexadecanoate + ATP + CoA = hexadecanoyl-CoA + AMP + diphosphate. The catalysed reaction is (E)-hexadec-2-enoate + ATP + CoA = (2E)-hexadecenoyl-CoA + AMP + diphosphate. The enzyme catalyses 2,6,10,14-tetramethylpentadecanoate + ATP + CoA = pristanoyl-CoA + AMP + diphosphate. It carries out the reaction 14,15-epoxy-(5Z,8Z,11Z)-eicosatrienoate + ATP + CoA = 14,15-epoxy-(5Z,8Z,11Z)-eicosatrienoyl-CoA + AMP + diphosphate. It catalyses the reaction 5-hydroxy-(6E,8Z,11Z,14Z)-eicosatetraenoate + ATP + CoA = 5-hydroxy-(6E,8Z,11Z,14Z)-eicosatetraenoyl-CoA + AMP + diphosphate. The catalysed reaction is 12-hydroxy-(5Z,8Z,10E,14Z)-eicosatetraenoate + ATP + CoA = 12-hydroxy-(5Z,8Z,10E,14Z)-eicosatetraenoyl-CoA + AMP + diphosphate. The enzyme catalyses 15-hydroxy-(5Z,8Z,11Z,13E)-eicosatetraenoate + ATP + CoA = 15-hydroxy-(5Z,8Z,11Z,13E)-eicosatetraenoyl-CoA + AMP + diphosphate. It carries out the reaction (9Z)-octadecenoate + ATP + CoA = (9Z)-octadecenoyl-CoA + AMP + diphosphate. Its activity is regulated as follows. Inhibited at high temperature and by arachidonate. In terms of biological role, catalyzes the conversion of long-chain fatty acids to their active form acyl-CoAs for both synthesis of cellular lipids, and degradation via beta-oxidation. Preferentially uses palmitoleate, oleate and linoleate. Preferentially activates arachidonate than epoxyeicosatrienoic acids (EETs) or hydroxyeicosatrienoic acids (HETEs). The chain is Long-chain-fatty-acid--CoA ligase 1 from Rattus norvegicus (Rat).